Here is a 337-residue protein sequence, read N- to C-terminus: MKHLLSTEDLSLANAIRILDTAEEMAAVGDREVKKLPALRGRTVVNLFFEDSTRTRISFEAAAKRLSADVINFAAKGSSVSKGESLKDTAQTLAAMGADAVVIRHWASGAPHRLAATDWIDAAVINAGDGTHEHPTQALLDAFTMRRHWARLHGTPSAGADLKGMRVAIAGDVLHSRVARSNVWLLRTLGAEVTLVAPPTLLPIGVGQWPCSVSYDMDETLAKGVDAVVMLRVQGERMNASFFPTTREYSRRWGFDDNRLRALDSLGLKDTIIMHPGPMNRGLEISSAAADSPRSTVLAQVRNGVSVRMAALYLLLSGDTREPALTPNAAYSTKESH.

2 residues coordinate carbamoyl phosphate: Arg54 and Thr55. Residue Lys82 participates in L-aspartate binding. Carbamoyl phosphate contacts are provided by Arg104, His134, and Gln137. L-aspartate is bound by residues Arg177 and Arg232. Carbamoyl phosphate-binding residues include Gly277 and Pro278.

Belongs to the aspartate/ornithine carbamoyltransferase superfamily. ATCase family. Heterododecamer (2C3:3R2) of six catalytic PyrB chains organized as two trimers (C3), and six regulatory PyrI chains organized as three dimers (R2).

It catalyses the reaction carbamoyl phosphate + L-aspartate = N-carbamoyl-L-aspartate + phosphate + H(+). It participates in pyrimidine metabolism; UMP biosynthesis via de novo pathway; (S)-dihydroorotate from bicarbonate: step 2/3. Catalyzes the condensation of carbamoyl phosphate and aspartate to form carbamoyl aspartate and inorganic phosphate, the committed step in the de novo pyrimidine nucleotide biosynthesis pathway. This chain is Aspartate carbamoyltransferase catalytic subunit, found in Arthrobacter sp. (strain FB24).